A 316-amino-acid polypeptide reads, in one-letter code: Transaldolase (316 aa).

Lys132 functions as the Schiff-base intermediate with substrate in the catalytic mechanism.

This sequence belongs to the transaldolase family. Type 1 subfamily. Homodimer.

It localises to the cytoplasm. The catalysed reaction is D-sedoheptulose 7-phosphate + D-glyceraldehyde 3-phosphate = D-erythrose 4-phosphate + beta-D-fructose 6-phosphate. The protein operates within carbohydrate degradation; pentose phosphate pathway; D-glyceraldehyde 3-phosphate and beta-D-fructose 6-phosphate from D-ribose 5-phosphate and D-xylulose 5-phosphate (non-oxidative stage): step 2/3. Functionally, transaldolase is important for the balance of metabolites in the pentose-phosphate pathway. This is Transaldolase from Aliivibrio fischeri (strain MJ11) (Vibrio fischeri).